A 206-amino-acid polypeptide reads, in one-letter code: Small ribosomal subunit protein uS4 (206 aa).

The S4 RNA-binding domain maps to 96-156 (TRLDNVVYRM…EKSRTQARIK (61 aa)).

It belongs to the universal ribosomal protein uS4 family. In terms of assembly, part of the 30S ribosomal subunit. Contacts protein S5. The interaction surface between S4 and S5 is involved in control of translational fidelity.

Its function is as follows. One of the primary rRNA binding proteins, it binds directly to 16S rRNA where it nucleates assembly of the body of the 30S subunit. Functionally, with S5 and S12 plays an important role in translational accuracy. This chain is Small ribosomal subunit protein uS4, found in Shewanella sp. (strain MR-4).